The chain runs to 336 residues: MEQIHGGDSNSGGGGGGSSRNDEISVTRASRFDALPEDCISKVISHTSPRDACVVASVSKSVKSAAQSDLVWEMFLPSEYSSLVLQSANHLSKKEIFLSLADNSVLVENGKKSFWVEKASGKKCYMLSAMELTIIWGDSPAYWKWITVPESKFEKVAELRNVCWFEVRGKISCGMLSKGTHYSVYVVFKTANGRSYGFDLVPVEAGVGFVGKVATKKSVYFESGNADSRSATSHYSGISYAMVSRAFRMRRPWMQVQREEEEEVEGERERGMNVVGPKERVDGWSEVELGKFYINNGGCGDDGSDEIEISIMETQNGNWKSGLIIQGIEIRPERSN.

The tract at residues 1 to 22 (MEQIHGGDSNSGGGGGGSSRND) is disordered. A compositionally biased stretch (gly residues) spans 9–18 (SNSGGGGGGS). Residues 29–75 (ASRFDALPEDCISKVISHTSPRDACVVASVSKSVKSAAQSDLVWEMF) enclose the F-box domain.

In terms of assembly, part of a SCF (ASK-cullin-F-box) protein ligase complex. Interacts with SKP1A/ASK1 and SPK1B/ASK2.

It localises to the nucleus. It functions in the pathway protein modification; protein ubiquitination. In terms of biological role, component of SCF(ASK-cullin-F-box) E3 ubiquitin ligase complexes, which may mediate the ubiquitination and subsequent proteasomal degradation of target proteins. The sequence is that of F-box protein PP2-B1 (PP2B1) from Arabidopsis thaliana (Mouse-ear cress).